Reading from the N-terminus, the 2813-residue chain is von Willebrand factor (2813 aa).

A signal peptide spans 1-22; that stretch reads MIPARFAGVLLALALILPGTLC. A VWFD 1 domain is found at 33 to 201; the sequence is ARCSLFGSDF…ALSSGEQWCE (169 aa). 2 disulfide bridges follow: Cys-35-Cys-162 and Cys-57-Cys-200. Residues Asn-99, Asn-156, and Asn-211 are each glycosylated (N-linked (GlcNAc...) asparagine). In terms of domain architecture, TIL 1 spans 295 to 348; the sequence is CPAGMEYRQCVSPCARTCQSLHINEMCQERCVDGCSCPEGQLLDEGLCVESTEC. A VWFD 2 domain is found at 386 to 560; the sequence is GECLVTGQSH…NAWKLHGDCQ (175 aa). 3 disulfides stabilise this stretch: Cys-388-Cys-524, Cys-410-Cys-559, and Cys-432-Cys-440. TIL domains are found at residues 652–707 and 776–827; these read CPKG…KAQC and CPAD…LERC. Asn-666 carries an N-linked (GlcNAc...) asparagine glycan. The tract at residues 764–787 is amino-terminal; that stretch reads SLSCRPPMVKLVCPADNLRAEGLE. Disulfide bonds link Cys-767–Cys-808, Cys-776–Cys-804, and Cys-810–Cys-821. The E1 stretch occupies residues 788 to 833; sequence CTKTCQNYDLECMSMGCVSGCLCPPGMVRHENRCVALERCPCFHQG. Positions 826 to 853 are CX; it reads RCPCFHQGKEYAPGETVKIGCNTCVCQD. The N-linked (GlcNAc...) asparagine glycan is linked to Asn-857. One can recognise a VWFD 3 domain in the interval 865–1032; the sequence is ATCSTIGMAH…NSWKVSSQCA (168 aa). Cystine bridges form between Cys-867-Cys-996, Cys-889-Cys-1031, Cys-898-Cys-993, Cys-914-Cys-921, Cys-1060-Cys-1084, Cys-1071-Cys-1111, Cys-1089-Cys-1091, and Cys-1126-Cys-1130. Residues 1146-1196 enclose the TIL 4 domain; sequence YNSCAPACQVTCQHPEPLACPVQCVEGCHAHCPPGKILDELLQTCVDPEDC. N-linked (GlcNAc...) asparagine; atypical glycosylation occurs at Asn-1147. 3 cysteine pairs are disulfide-bonded: Cys-1149–Cys-1169, Cys-1153–Cys-1165, and Cys-1196–Cys-1199. The N-linked (GlcNAc...) asparagine glycan is linked to Asn-1231. Cysteines 1234 and 1237 form a disulfide. Residues Thr-1248, Thr-1255, and Thr-1256 are each glycosylated (O-linked (GalNAc...) threonine). Residue Ser-1263 is glycosylated (O-linked (GalNAc...) serine). Residues Cys-1272 and Cys-1458 are joined by a disulfide bond. The region spanning 1277 to 1453 is the VWFA 1; binding site for platelet glycoprotein Ib domain; it reads DLVFLLDGSS…DELEQQRDEI (177 aa). Residues Thr-1468 and Thr-1477 are each glycosylated (O-linked (GalNAc...) threonine). Ser-1486 carries O-linked (GalNAc...) serine glycosylation. Thr-1487 carries an O-linked (GalNAc...) threonine glycan. One can recognise a VWFA 2 domain in the interval 1498–1665; the sequence is DVAFVLEGSD…TLPREAPDLV (168 aa). Asn-1515 carries N-linked (GlcNAc...) (complex) asparagine glycosylation. The N-linked (GlcNAc...) asparagine glycan is linked to Asn-1574. A disulfide bond links Cys-1669 and Cys-1670. O-linked (GalNAc...) threonine glycosylation occurs at Thr-1679. 7 disulfides stabilise this stretch: Cys-1686/Cys-1872, Cys-1879/Cys-1904, Cys-1899/Cys-1940, Cys-1927/Cys-2088, Cys-1950/Cys-2085, Cys-1972/Cys-2123, and Cys-1993/Cys-2001. In terms of domain architecture, VWFA 3; main binding site for collagens type I and III spans 1691–1871; sequence DVILLLDGSS…TLGNSFLHKL (181 aa). The VWFD 4 domain occupies 1948–2124; that stretch reads CVCTGSSTRH…TVQRPGQTCQ (177 aa). Residues 2216–2261 form an E2 region; it reads CPRHCDGNVSSCGDHPSEGCFCPPDKVMLEGSCVPEEACTQCIGED. N-linked (GlcNAc...) asparagine glycosylation is found at Asn-2223 and Asn-2290. The VWFC 1 domain occupies 2255–2328; sequence TQCIGEDGVQ…CCPEYECVCD (74 aa). Thr-2298 carries O-linked (GalNAc...) threonine glycosylation. Asn-2357 and Asn-2400 each carry an N-linked (GlcNAc...) asparagine glycan. Positions 2429–2495 constitute a VWFC 2 domain; that stretch reads KVCVHRSTIY…HEGECCGRCL (67 aa). The short motif at 2507–2509 is the Cell attachment site element; sequence RGD. N-linked (GlcNAc...) asparagine glycans are attached at residues Asn-2546 and Asn-2585. The 66-residue stretch at 2580–2645 folds into the VWFC 3 domain; it reads EACMLNGTVI…NTGECCGRCL (66 aa). 4 cysteine pairs are disulfide-bonded: Cys-2724–Cys-2774, Cys-2739–Cys-2788, Cys-2750–Cys-2804, and Cys-2754–Cys-2806. The CTCK domain maps to 2724-2812; it reads CNDITARLQY…ECKCSPRKCS (89 aa). An N-linked (GlcNAc...) asparagine glycan is attached at Asn-2790.

As to quaternary structure, multimeric. Interacts with F8. In terms of processing, all cysteine residues are involved in intrachain or interchain disulfide bonds. N- and O-glycosylated. As to expression, plasma.

The protein localises to the secreted. It localises to the extracellular space. Its subcellular location is the extracellular matrix. In terms of biological role, important in the maintenance of hemostasis, it promotes adhesion of platelets to the sites of vascular injury by forming a molecular bridge between sub-endothelial collagen matrix and platelet-surface receptor complex GPIb-IX-V. Also acts as a chaperone for coagulation factor VIII, delivering it to the site of injury, stabilizing its heterodimeric structure and protecting it from premature clearance from plasma. This is von Willebrand factor (VWF) from Homo sapiens (Human).